We begin with the raw amino-acid sequence, 441 residues long: Ribulose bisphosphate carboxylase large chain (441 aa).

Lys4 carries the N6,N6,N6-trimethyllysine modification. Residues Asn113 and Thr163 each contribute to the substrate site. The active-site Proton acceptor is the Lys165. Residue Lys167 coordinates substrate. Lys191, Asp193, and Glu194 together coordinate Mg(2+). An N6-carboxylysine modification is found at Lys191. The active-site Proton acceptor is His284. The substrate site is built by Arg285, His317, and Ser369.

The protein belongs to the RuBisCO large chain family. Type I subfamily. Heterohexadecamer of 8 large chains and 8 small chains; disulfide-linked. The disulfide link is formed within the large subunit homodimers. Mg(2+) is required as a cofactor. The disulfide bond which can form in the large chain dimeric partners within the hexadecamer appears to be associated with oxidative stress and protein turnover.

Its subcellular location is the plastid. The protein localises to the chloroplast. It carries out the reaction 2 (2R)-3-phosphoglycerate + 2 H(+) = D-ribulose 1,5-bisphosphate + CO2 + H2O. The catalysed reaction is D-ribulose 1,5-bisphosphate + O2 = 2-phosphoglycolate + (2R)-3-phosphoglycerate + 2 H(+). Its function is as follows. RuBisCO catalyzes two reactions: the carboxylation of D-ribulose 1,5-bisphosphate, the primary event in carbon dioxide fixation, as well as the oxidative fragmentation of the pentose substrate in the photorespiration process. Both reactions occur simultaneously and in competition at the same active site. This Darlingtonia californica (California pitcher plant) protein is Ribulose bisphosphate carboxylase large chain.